The sequence spans 389 residues: Chalcone synthase 2 (389 aa).

The active site involves C164.

It belongs to the thiolase-like superfamily. Chalcone/stilbene synthases family.

The enzyme catalyses (E)-4-coumaroyl-CoA + 3 malonyl-CoA + 3 H(+) = 2',4,4',6'-tetrahydroxychalcone + 3 CO2 + 4 CoA. The protein operates within secondary metabolite biosynthesis; flavonoid biosynthesis. Its function is as follows. The primary product of this enzyme is 4,2',4',6'-tetrahydroxychalcone (also termed naringenin-chalcone or chalcone) which can under specific conditions spontaneously isomerize into naringenin. This chain is Chalcone synthase 2 (CHS2), found in Pisum sativum (Garden pea).